Consider the following 955-residue polypeptide: Sex determination protein fruitless (955 aa).

Disordered stretches follow at residues 1–55 and 70–89; these read MMAT…HAHS and IETDVRAPPPPLPPPPLPLP. Over residues 35–55 the composition is skewed to basic residues; sequence PHGHGHLHSHAHAHGHGHAHS. A compositionally biased stretch (pro residues) spans 76-89; that stretch reads APPPPLPPPPLPLP. Positions 131–196 constitute a BTB domain; it reads CDVTLACEGE…MYKGEVNVGQ (66 aa). Disordered stretches follow at residues 229 to 288, 352 to 526, and 784 to 814; these read LRDS…SMSE, NRSA…LGGG, and ANHQLHQHPPSATHPSHSQSSPHYPSASGAG. The segment covering 233-246 has biased composition (polar residues); that stretch reads AASSPTGRGPSNYT. Composition is skewed to basic and acidic residues over residues 258 to 279 and 360 to 379; these read AMRESRDSLRSRCERDLRDELT and CSDRGSERGTLERTDSRDDL. The span at 387-420 shows a compositional bias: low complexity; sequence KDNNNSNSSSTGGNNNNNNNNNNNSSSNNNNSSS. The segment covering 421 to 446 has biased composition (basic and acidic residues); the sequence is NRERNNSGERERERERERERDRDREL. Composition is skewed to low complexity over residues 464–475 and 790–814; these read SSSNCDNSLSSS and QHPPSATHPSHSQSSPHYPSASGAG. The C2H2-type zinc-finger motif lies at 918-941; the sequence is HECPVCGQKFTRRDNMKAHCKIKH.

As to expression, expressed in parts of the adult male brain associated with the courtship song and steps of the male courtship. Also expressed in the larval and pupal male mushroom body and optic lobe. Expressed in pupal female optic lobe.

Its subcellular location is the nucleus. Functionally, probably acts as a transcriptional regulator. Part of the somatic sex determination hierarchy; sex determination genes transformer (tra) and transformer-2 (tra-2) switch fru splicing from the male-specific pattern to the female-specific pattern through activation of the female-specific fru 5'-splice site. Vital for the development of males and females. Controls the development of the male specific abdominal muscle of Lawrence. Plays a role in male courtship behavior and sexual orientation. Enhances male-specific expression of takeout in brain-associated fat body. This is Sex determination protein fruitless (fru) from Drosophila melanogaster (Fruit fly).